A 287-amino-acid chain; its full sequence is Phosphatidylglycerol--prolipoprotein diacylglyceryl transferase (287 aa).

Helical transmembrane passes span 26–46 (VAIR…WWLA), 71–91 (FLVW…ILFY), 106–126 (IWRG…AMIV), and 132–152 (GLPV…GLFF). R154 contributes to the a 1,2-diacyl-sn-glycero-3-phospho-(1'-sn-glycerol) binding site. 3 consecutive transmembrane segments (helical) span residues 187–207 (SQLY…QVLA), 217–237 (GVIS…VEFF), and 251–271 (WLTM…WAIW).

It belongs to the Lgt family.

The protein resides in the cell inner membrane. The catalysed reaction is L-cysteinyl-[prolipoprotein] + a 1,2-diacyl-sn-glycero-3-phospho-(1'-sn-glycerol) = an S-1,2-diacyl-sn-glyceryl-L-cysteinyl-[prolipoprotein] + sn-glycerol 1-phosphate + H(+). The protein operates within protein modification; lipoprotein biosynthesis (diacylglyceryl transfer). Catalyzes the transfer of the diacylglyceryl group from phosphatidylglycerol to the sulfhydryl group of the N-terminal cysteine of a prolipoprotein, the first step in the formation of mature lipoproteins. The protein is Phosphatidylglycerol--prolipoprotein diacylglyceryl transferase of Allorhizobium ampelinum (strain ATCC BAA-846 / DSM 112012 / S4) (Agrobacterium vitis (strain S4)).